The sequence spans 700 residues: Auxin response factor 18 (700 aa).

A DNA-binding region (TF-B3) is located at residues 128-230; that stretch reads FAKTLTQSDA…DLCVGIRRAK (103 aa). Disordered regions lie at residues 234–254 and 560–595; these read VGGPEFLPPPPPPPPTPAAGG and VKKSSSDGNAENTVNKSNSDVSSPRSNQNGTTDNLS. Residues 239–250 are compositionally biased toward pro residues; that stretch reads FLPPPPPPPPTP. The span at 565-594 shows a compositional bias: polar residues; it reads SDGNAENTVNKSNSDVSSPRSNQNGTTDNL. The PB1 domain maps to 614 to 697; sequence TGHCKVFMQS…NILTDTSGDN (84 aa).

Belongs to the ARF family. As to quaternary structure, homodimers and heterodimers. In terms of tissue distribution, expressed in roots, culms, leaves and young panicles.

It is found in the nucleus. Its function is as follows. Auxin response factors (ARFs) are transcriptional factors that bind specifically to the DNA sequence 5'-TGTCTC-3' found in the auxin-responsive promoter elements (AuxREs). This is Auxin response factor 18 (ARF18) from Oryza sativa subsp. japonica (Rice).